Reading from the N-terminus, the 141-residue chain is Small ribosomal subunit protein bS16 (141 aa).

2 stretches are compositionally biased toward polar residues: residues 89–101 (NVSV…TEAI) and 109–129 (ATAN…TATI). The segment at 89 to 141 (NVSVSHAESTEAITNAEPIQATANTESNEVSDSESTATATIRESEEQPPISES) is disordered.

The protein belongs to the bacterial ribosomal protein bS16 family.

In Trichodesmium erythraeum (strain IMS101), this protein is Small ribosomal subunit protein bS16.